A 356-amino-acid chain; its full sequence is Metacaspase-1 (356 aa).

The interval M1–G47 is disordered. Active-site residues include H147 and C203.

The protein belongs to the peptidase C14B family.

Its function is as follows. Involved in cell death (apoptosis). This Ajellomyces capsulatus (strain NAm1 / WU24) (Darling's disease fungus) protein is Metacaspase-1 (MCA1).